We begin with the raw amino-acid sequence, 533 residues long: Peptide chain release factor 3 (533 aa).

A tr-type G domain is found at 9–284 (ARRRTFAIIS…ALCELSPPPL (276 aa)). Residues 18–25 (SHPDAGKT), 95–99 (DTPGH), and 149–152 (NKLD) each bind GTP.

This sequence belongs to the TRAFAC class translation factor GTPase superfamily. Classic translation factor GTPase family. PrfC subfamily.

The protein resides in the cytoplasm. Increases the formation of ribosomal termination complexes and stimulates activities of RF-1 and RF-2. It binds guanine nucleotides and has strong preference for UGA stop codons. It may interact directly with the ribosome. The stimulation of RF-1 and RF-2 is significantly reduced by GTP and GDP, but not by GMP. The protein is Peptide chain release factor 3 of Cupriavidus necator (strain ATCC 17699 / DSM 428 / KCTC 22496 / NCIMB 10442 / H16 / Stanier 337) (Ralstonia eutropha).